The following is a 133-amino-acid chain: Small ribosomal subunit protein uS19 (133 aa).

The protein belongs to the universal ribosomal protein uS19 family. In terms of assembly, part of the 30S ribosomal subunit.

Protein S19 forms a complex with S13 that binds strongly to the 16S ribosomal RNA. This Thermococcus kodakarensis (strain ATCC BAA-918 / JCM 12380 / KOD1) (Pyrococcus kodakaraensis (strain KOD1)) protein is Small ribosomal subunit protein uS19.